Here is a 329-residue protein sequence, read N- to C-terminus: Beta-ketoacyl-[acyl-carrier-protein] synthase III (329 aa).

Active-site residues include Cys-123 and His-256. The tract at residues 257–261 (QANIR) is ACP-binding. Asn-286 is a catalytic residue.

This sequence belongs to the thiolase-like superfamily. FabH family. Homodimer.

The protein localises to the cytoplasm. The enzyme catalyses malonyl-[ACP] + acetyl-CoA + H(+) = 3-oxobutanoyl-[ACP] + CO2 + CoA. It functions in the pathway lipid metabolism; fatty acid biosynthesis. Functionally, catalyzes the condensation reaction of fatty acid synthesis by the addition to an acyl acceptor of two carbons from malonyl-ACP. Catalyzes the first condensation reaction which initiates fatty acid synthesis and may therefore play a role in governing the total rate of fatty acid production. Possesses both acetoacetyl-ACP synthase and acetyl transacylase activities. Its substrate specificity determines the biosynthesis of branched-chain and/or straight-chain of fatty acids. The chain is Beta-ketoacyl-[acyl-carrier-protein] synthase III from Burkholderia orbicola (strain AU 1054).